A 145-amino-acid chain; its full sequence is Natriuretic peptides A (145 aa).

The signal sequence occupies residues 1 to 23 (MGTSFVGYLTFVLLLLALTKVRG). Positions 24–117 (GPAYNSPLSS…KLRELLNAPR (94 aa)) are excised as a propeptide. The cysteines at positions 125 and 141 are disulfide-linked.

The protein belongs to the natriuretic peptide family. In terms of processing, cleaved upon secretion to produce the functional hormone.

It localises to the secreted. In terms of biological role, hormone playing a key role in cardiovascular homeostasis through regulation of natriuresis, diuresis, and vasodilation. Has a cGMP-stimulating activity. The polypeptide is Natriuretic peptides A (Aquarana catesbeiana (American bullfrog)).